A 138-amino-acid chain; its full sequence is Large ribosomal subunit protein uL16 (138 aa).

A compositionally biased stretch (basic residues) spans 1–13; sequence MLQPSRRKYRKEQ. The interval 1–24 is disordered; that stretch reads MLQPSRRKYRKEQKGRNTGLASRG.

It belongs to the universal ribosomal protein uL16 family. As to quaternary structure, part of the 50S ribosomal subunit.

Its function is as follows. Binds 23S rRNA and is also seen to make contacts with the A and possibly P site tRNAs. In Bordetella bronchiseptica (strain ATCC BAA-588 / NCTC 13252 / RB50) (Alcaligenes bronchisepticus), this protein is Large ribosomal subunit protein uL16.